The following is a 408-amino-acid chain: RNA-splicing ligase RtcB1 (408 aa).

The Mn(2+) site is built by D75, C78, H168, H185, and H281. Position 167–171 (167–171) interacts with GMP; that stretch reads NHFIE. Residues 281–282, 313–316, S320, 337–340, and K407 contribute to the GMP site; these read HN, PGSM, and HGAG. The active-site GMP-histidine intermediate is the H337.

It belongs to the RtcB family. As to quaternary structure, monomer. The cofactor is Mn(2+).

The enzyme catalyses a 3'-end 3'-phospho-ribonucleotide-RNA + a 5'-end dephospho-ribonucleoside-RNA + GTP = a ribonucleotidyl-ribonucleotide-RNA + GMP + diphosphate. It catalyses the reaction a 3'-end 2',3'-cyclophospho-ribonucleotide-RNA + a 5'-end dephospho-ribonucleoside-RNA + GTP + H2O = a ribonucleotidyl-ribonucleotide-RNA + GMP + diphosphate + H(+). Functionally, GTP-dependent RNA ligase that is involved in RNA repair. Joins RNA with 2',3'-cyclic-phosphate or 3'-phosphate ends to RNA with 5'-hydroxy ends. GTP-dependent RNA ligase that is involved in tRNA repair. Repairs broken tRNA(Asp) and tRNA(Arg) that have been cleaved by colicin E5 or colicin D, respectively. Does not repair damaged 16S rRNA in 30S ribosomal subunits. The chain is RNA-splicing ligase RtcB1 from Escherichia coli (strain ATCC 25922 / DSM 1103 / LMG 8223 / NCIMB 12210 / NCTC 12241 / WDCM 00013 / Seattle 1946).